We begin with the raw amino-acid sequence, 162 residues long: MARVEL domain-containing protein 1 (162 aa).

The Cytoplasmic portion of the chain corresponds to 1-17 (MPTQPQEKRSFLQFLKS). In terms of domain architecture, MARVEL spans 14 to 155 (FLKSFVGIVR…SGIYCSCRKC (142 aa)). The chain crosses the membrane as a helical span at residues 18–38 (FVGIVRVLQILLGAGLWVTIA). The Extracellular segment spans residues 39–47 (ANKYEGSIH). A helical transmembrane segment spans residues 48 to 68 (FVLFVAVLFWLLTLAIFILTL). Over 69–86 (LDKQDLVPIVGGERWLLS) the chain is Cytoplasmic. Residues 87 to 107 (NLIHDVVATLLYLSTIGIMIY) traverse the membrane as a helical segment. At 108-127 (KTQKNSYCNLDVYKHHCLYK) the chain is on the extracellular side. A helical membrane pass occupies residues 128-148 (VYLTASVFACLTAAVYLLSGI). Over 149–162 (YCSCRKCRGERTVV) the chain is Cytoplasmic.

The protein localises to the membrane. It is found in the nucleus. The protein is MARVEL domain-containing protein 1 (marveld1) of Danio rerio (Zebrafish).